We begin with the raw amino-acid sequence, 955 residues long: Glycine dehydrogenase (decarboxylating) (955 aa).

Lys702 carries the post-translational modification N6-(pyridoxal phosphate)lysine.

The protein belongs to the GcvP family. The glycine cleavage system is composed of four proteins: P, T, L and H. Requires pyridoxal 5'-phosphate as cofactor.

The enzyme catalyses N(6)-[(R)-lipoyl]-L-lysyl-[glycine-cleavage complex H protein] + glycine + H(+) = N(6)-[(R)-S(8)-aminomethyldihydrolipoyl]-L-lysyl-[glycine-cleavage complex H protein] + CO2. Functionally, the glycine cleavage system catalyzes the degradation of glycine. The P protein binds the alpha-amino group of glycine through its pyridoxal phosphate cofactor; CO(2) is released and the remaining methylamine moiety is then transferred to the lipoamide cofactor of the H protein. This is Glycine dehydrogenase (decarboxylating) from Stenotrophomonas maltophilia (strain K279a).